Reading from the N-terminus, the 137-residue chain is MRHYEIVFMVHPDQSEQVPAMIERYTSVITEDGGKVHRLEDWGRRHLAYPINKIHKAHYVLMNIECSQAAMDELTHNFRFNDAIIRDLILRRDEAVTDLSPMKAAESREDRRSGGDDRPRRSADSEERQSASQDEEE.

Residues 99–137 form a disordered region; the sequence is LSPMKAAESREDRRSGGDDRPRRSADSEERQSASQDEEE. Positions 105 to 129 are enriched in basic and acidic residues; it reads AESREDRRSGGDDRPRRSADSEERQ.

It belongs to the bacterial ribosomal protein bS6 family.

Its function is as follows. Binds together with bS18 to 16S ribosomal RNA. This chain is Small ribosomal subunit protein bS6, found in Marinobacter nauticus (strain ATCC 700491 / DSM 11845 / VT8) (Marinobacter aquaeolei).